We begin with the raw amino-acid sequence, 228 residues long: MQSALDRRGLGPVAGVDEAGRGACAGPLVVAACALKPGDGRRFEGLTDSKVLSPAERERLYDVIQAKALSLSVIVIPADEVDALGIHVANLEGMRRAVAQLSVAPGYVLTDGFRVPGLGAPSVAVVKGDLVAACVAAASVLAKVTRDRIMTGLHEQFPVYGFDEHKGYCTSDHTARLTEHGPCEEHRWCYANVVAAAQLHGMRSPRTVSSKPGLFDAFEGDVVDNEQL.

The 192-residue stretch at 11-202 (GPVAGVDEAG…VVAAAQLHGM (192 aa)) folds into the RNase H type-2 domain. A divalent metal cation is bound by residues aspartate 17, glutamate 18, and aspartate 111.

It belongs to the RNase HII family. The cofactor is Mn(2+). Requires Mg(2+) as cofactor.

Its subcellular location is the cytoplasm. It carries out the reaction Endonucleolytic cleavage to 5'-phosphomonoester.. Functionally, endonuclease that specifically degrades the RNA of RNA-DNA hybrids. The polypeptide is Ribonuclease HII (Saccharopolyspora erythraea (strain ATCC 11635 / DSM 40517 / JCM 4748 / NBRC 13426 / NCIMB 8594 / NRRL 2338)).